The following is a 220-amino-acid chain: MPLLESTLHIRHLGRQDYESVWHAMQHYTDNRDENSQDEIWVVEHTPVFTQGQAGKSEHILNPGDIPVIQVDRGGQVTYHGPGQLVIYPLLDIKRLKVGVRQLVTHIEQSIVNMLKRYDVEAYAKADAPGVYVEERKVASLGLRIRKGCSFHGLALNVDMDMSPFQRINPCGYAGMEMIQCKQLGGPQTVEEAGKQLVETLSQELGLANLVHHQGLPESL.

One can recognise a BPL/LPL catalytic domain in the interval 34 to 209 (ENSQDEIWVV…TLSQELGLAN (176 aa)). Substrate-binding positions include 73–80 (RGGQVTYH), 140–142 (SLG), and 153–155 (GLA). Cys-171 serves as the catalytic Acyl-thioester intermediate.

The protein belongs to the LipB family.

Its subcellular location is the cytoplasm. The catalysed reaction is octanoyl-[ACP] + L-lysyl-[protein] = N(6)-octanoyl-L-lysyl-[protein] + holo-[ACP] + H(+). It participates in protein modification; protein lipoylation via endogenous pathway; protein N(6)-(lipoyl)lysine from octanoyl-[acyl-carrier-protein]: step 1/2. Functionally, catalyzes the transfer of endogenously produced octanoic acid from octanoyl-acyl-carrier-protein onto the lipoyl domains of lipoate-dependent enzymes. Lipoyl-ACP can also act as a substrate although octanoyl-ACP is likely to be the physiological substrate. This is Octanoyltransferase from Shewanella piezotolerans (strain WP3 / JCM 13877).